Here is a 195-residue protein sequence, read N- to C-terminus: GRF1-interacting factor 2 (195 aa).

The interval 166–195 (QQPETGLGGNVGLRGGKQDGADGQGKDDGK) is disordered. The segment covering 171–180 (GLGGNVGLRG) has biased composition (gly residues). Positions 181 to 195 (GKQDGADGQGKDDGK) are enriched in basic and acidic residues.

This sequence belongs to the SS18 family. In terms of assembly, interacts with GRF1. Predominantly expressed in shoot tips containing the shoot apical meristem (SAM) and flower buds. Also expressed in mature flowers.

Transcription coactivator that plays a role in the regulation of cell expansion in leaf and cotyledons tissues. Component of a network formed by miR396, the GRFs and their interacting factors (GIFs) acting in the regulation of meristem function, at least partially through the control of cell proliferation. GIFs are involved in the positive regulation of cell proliferation of lateral organs in a functionally redundant manner. The sequence is that of GRF1-interacting factor 2 (GIF2) from Arabidopsis thaliana (Mouse-ear cress).